The following is a 95-amino-acid chain: Integration host factor subunit beta (95 aa).

The protein belongs to the bacterial histone-like protein family. Heterodimer of an alpha and a beta chain.

In terms of biological role, this protein is one of the two subunits of integration host factor, a specific DNA-binding protein that functions in genetic recombination as well as in transcriptional and translational control. This chain is Integration host factor subunit beta, found in Colwellia psychrerythraea (strain 34H / ATCC BAA-681) (Vibrio psychroerythus).